The primary structure comprises 351 residues: Riboflavin-binding protein RibY (351 aa).

An N-terminal signal peptide occupies residues 1 to 19; it reads MMKLRVLTLGILIILLITA. C20 is lipidated: N-palmitoyl cysteine. C20 carries S-diacylglycerol cysteine lipidation.

This sequence belongs to the NMT1 family. In terms of assembly, the complex is likely composed of an ATP-binding protein, a transmembrane protein (RibX) and a solute-binding protein (RibY).

It localises to the cell membrane. Functionally, part of an ABC transporter complex that transports riboflavin into the cell. Binds riboflavin. The chain is Riboflavin-binding protein RibY from Chloroflexus aurantiacus (strain ATCC 29366 / DSM 635 / J-10-fl).